Here is a 301-residue protein sequence, read N- to C-terminus: tRNA dimethylallyltransferase (301 aa).

9 to 16 (GPTASGKS) serves as a coordination point for ATP. A substrate-binding site is contributed by 11–16 (TASGKS). Positions 34–37 (DSMQ) are interaction with substrate tRNA.

It belongs to the IPP transferase family. As to quaternary structure, monomer. The cofactor is Mg(2+).

The catalysed reaction is adenosine(37) in tRNA + dimethylallyl diphosphate = N(6)-dimethylallyladenosine(37) in tRNA + diphosphate. Functionally, catalyzes the transfer of a dimethylallyl group onto the adenine at position 37 in tRNAs that read codons beginning with uridine, leading to the formation of N6-(dimethylallyl)adenosine (i(6)A). The protein is tRNA dimethylallyltransferase of Corynebacterium efficiens (strain DSM 44549 / YS-314 / AJ 12310 / JCM 11189 / NBRC 100395).